The sequence spans 862 residues: Rab GTPase-binding effector protein 1 (862 aa).

Position 2 is an N-acetylalanine (A2). Residues 11–345 are a coiled coil; that stretch reads DVSLQQRVAE…KKADVEEEIK (335 aa). The residue at position 282 (K282) is an N6-acetyllysine. A disordered region spans residues 315–338; sequence ELKKKDQEDDEQQRLNKRKDHKKA. Phosphoserine occurs at positions 374, 377, and 407. T408 carries the post-translational modification Phosphothreonine. A Phosphoserine modification is found at S410. Residues 435–447 are interaction with AP1G1, AP1G2, GGA1, GGA2 and GGA3; it reads DESDFGPLVGADS. Residues 534–816 are a coiled coil; that stretch reads DMCSNYEKQL…LQTELDVSEQ (283 aa).

Belongs to the rabaptin family. In terms of assembly, homodimer when bound to RAB5A. Heterodimer with RABGEF1. The heterodimer binds RAB4A and RAB5A that have been activated by GTP-binding. Interacts with TSC2. Interacts with GGA1 (via GAE domain), GGA2 (via GAE domain) and GGA3 (via GAE domain). Interacts with AP1G1 (via GAE domain). Interacts with AP1G2 (via GAE domain). Interacts with ECPAS. Interacts with KCNH1. Interacts with PKD1 (via C-terminal domain) and GGA1; the interactions recruit PKD1:PKD2 complex to GGA1 and ARL3 at trans-Golgi network. Proteolytic cleavage by caspases in apoptotic cells causes loss of endosome fusion activity.

Its subcellular location is the cytoplasm. The protein resides in the early endosome. It localises to the recycling endosome. It is found in the cytoplasmic vesicle. Rab effector protein acting as linker between gamma-adaptin, RAB4A and RAB5A. Involved in endocytic membrane fusion and membrane trafficking of recycling endosomes. Involved in KCNH1 channels trafficking to and from the cell membrane. Stimulates RABGEF1 mediated nucleotide exchange on RAB5A. Mediates the traffic of PKD1:PKD2 complex from the endoplasmic reticulum through the Golgi to the cilium. The polypeptide is Rab GTPase-binding effector protein 1 (RABEP1) (Homo sapiens (Human)).